A 281-amino-acid chain; its full sequence is Large ribosomal subunit protein uL2 (281 aa).

Residues 224–281 (RGSAMNPNDHPHGGGEGHQPIGRKSPMTPWGKKALGVKTRKTKKASNQFIIRRRKESK) form a disordered region.

The protein belongs to the universal ribosomal protein uL2 family. In terms of assembly, part of the 50S ribosomal subunit. Forms a bridge to the 30S subunit in the 70S ribosome.

One of the primary rRNA binding proteins. Required for association of the 30S and 50S subunits to form the 70S ribosome, for tRNA binding and peptide bond formation. It has been suggested to have peptidyltransferase activity; this is somewhat controversial. Makes several contacts with the 16S rRNA in the 70S ribosome. The sequence is that of Large ribosomal subunit protein uL2 from Metamycoplasma arthritidis (strain 158L3-1) (Mycoplasma arthritidis).